A 218-amino-acid polypeptide reads, in one-letter code: Octanoyltransferase (218 aa).

A BPL/LPL catalytic domain is found at 30-212 (ENTADEIWLV…HFYNILGYNA (183 aa)). Substrate is bound by residues 69–76 (RGGQITYH), 141–143 (SLG), and 154–156 (GLA). The Acyl-thioester intermediate role is filled by cysteine 172.

It belongs to the LipB family.

It is found in the cytoplasm. The catalysed reaction is octanoyl-[ACP] + L-lysyl-[protein] = N(6)-octanoyl-L-lysyl-[protein] + holo-[ACP] + H(+). It participates in protein modification; protein lipoylation via endogenous pathway; protein N(6)-(lipoyl)lysine from octanoyl-[acyl-carrier-protein]: step 1/2. Functionally, catalyzes the transfer of endogenously produced octanoic acid from octanoyl-acyl-carrier-protein onto the lipoyl domains of lipoate-dependent enzymes. Lipoyl-ACP can also act as a substrate although octanoyl-ACP is likely to be the physiological substrate. This Actinobacillus pleuropneumoniae serotype 5b (strain L20) protein is Octanoyltransferase.